The sequence spans 83 residues: Mu-theraphotoxin-Hhn2i (83 aa).

The first 21 residues, 1-21 (MKASMFLALAGLVLLFVVGYA), serve as a signal peptide directing secretion. A propeptide spanning residues 22–48 (SESEEKEFPRELLSKIFAVDDFKGEER) is cleaved from the precursor. Intrachain disulfides connect Cys-50–Cys-65, Cys-57–Cys-70, and Cys-64–Cys-77. Leu-81 carries the post-translational modification Leucine amide.

The protein belongs to the neurotoxin 10 (Hwtx-1) family. 15 (Hntx-3) subfamily. As to quaternary structure, monomer. Expressed by the venom gland.

The protein resides in the secreted. Functionally, lethal neurotoxin. Selectively blocks tetrodotoxin-sensitive voltage-gated sodium channels (Nav). Does not affect tetrodotoxin-resistant voltage-gated sodium channels or calcium channels. The polypeptide is Mu-theraphotoxin-Hhn2i (Cyriopagopus hainanus (Chinese bird spider)).